A 932-amino-acid polypeptide reads, in one-letter code: Receptor-like protein 9a (932 aa).

Positions Met-1–Cys-28 are cleaved as a signal peptide. The Extracellular segment spans residues Ile-29 to Thr-888. Residues Asn-53, Asn-80, and Asn-90 are each glycosylated (N-linked (GlcNAc...) asparagine). LRR repeat units lie at residues Phe-97–Ser-122, Leu-126–Ser-152, Arg-154–Asp-174, Leu-175–Lys-200, His-202–Gln-222, Leu-223–Ser-246, Leu-247–Ser-273, Glu-275–Asn-295, Leu-296–Gln-320, Lys-322–Gln-345, Lys-346–Glu-368, Tyr-370–Val-393, His-394–Val-417, Leu-418–Glu-441, Lys-443–Gly-466, Ser-468–Leu-491, Glu-492–Ser-514, Gly-516–Phe-535, Gly-536–Asn-560, Val-561–Phe-583, His-585–Leu-605, Glu-606–Arg-629, Phe-631–Leu-652, Lys-653–Val-676, Phe-745–Phe-769, Gln-770–Asn-792, Thr-794–Leu-817, and Tyr-819–Ser-842. The N-linked (GlcNAc...) asparagine glycan is linked to Asn-140. 2 N-linked (GlcNAc...) asparagine glycosylation sites follow: Asn-261 and Asn-295. N-linked (GlcNAc...) asparagine glycosylation is found at Asn-352 and Asn-380. N-linked (GlcNAc...) asparagine glycans are attached at residues Asn-420, Asn-425, and Asn-454. Residues Asn-524, Asn-551, and Asn-560 are each glycosylated (N-linked (GlcNAc...) asparagine). N-linked (GlcNAc...) asparagine glycosylation is found at Asn-666 and Asn-675. N-linked (GlcNAc...) asparagine glycosylation is found at Asn-776 and Asn-792. N-linked (GlcNAc...) asparagine glycans are attached at residues Asn-824, Asn-829, Asn-860, and Asn-866. Residues Phe-889–Cys-909 traverse the membrane as a helical segment. Over Phe-910–Val-932 the chain is Cytoplasmic.

Belongs to the RLP family.

The protein resides in the cell membrane. The polypeptide is Receptor-like protein 9a (Arabidopsis thaliana (Mouse-ear cress)).